A 136-amino-acid chain; its full sequence is Large-conductance mechanosensitive channel (136 aa).

The next 2 membrane-spanning stretches (helical) occupy residues 10 to 30 (FAMRGNVVDLAVGVIIGAAFG) and 76 to 96 (GVFIQNVFDFLIVAFAIFMAI).

The protein belongs to the MscL family. In terms of assembly, homopentamer.

The protein localises to the cell inner membrane. Its function is as follows. Channel that opens in response to stretch forces in the membrane lipid bilayer. May participate in the regulation of osmotic pressure changes within the cell. This chain is Large-conductance mechanosensitive channel, found in Escherichia coli O127:H6 (strain E2348/69 / EPEC).